Here is a 432-residue protein sequence, read N- to C-terminus: Adenosylhomocysteinase (432 aa).

Ser2 carries the post-translational modification N-acetylserine. Substrate contacts are provided by Thr57, Asp131, and Glu156. At Ser183 the chain carries Phosphoserine. Residues 183–350 (SVTKSKFDNL…EGRLVNLGCA (168 aa)) form an NAD binding region. Substrate is bound by residues Lys186 and Asp190. N6-(2-hydroxyisobutyryl)lysine is present on Lys186. At Tyr193 the chain carries Phosphotyrosine.

Belongs to the adenosylhomocysteinase family. As to quaternary structure, homotetramer. Interaction with AHCYL1. NAD(+) is required as a cofactor.

The protein resides in the cytoplasm. It localises to the melanosome. It is found in the nucleus. Its subcellular location is the endoplasmic reticulum. The catalysed reaction is S-adenosyl-L-homocysteine + H2O = L-homocysteine + adenosine. The protein operates within amino-acid biosynthesis; L-homocysteine biosynthesis; L-homocysteine from S-adenosyl-L-homocysteine: step 1/1. Catalyzes the hydrolysis of S-adenosyl-L-homocysteine to form adenosine and homocysteine. Binds copper ions. The chain is Adenosylhomocysteinase (AHCY) from Bos taurus (Bovine).